The primary structure comprises 324 residues: Acetyl-coenzyme A carboxylase carboxyl transferase subunit alpha (324 aa).

Positions 37–291 constitute a CoA carboxyltransferase C-terminal domain; it reads ILEDKLENLE…DLMIRKTFEQ (255 aa).

Belongs to the AccA family. As to quaternary structure, acetyl-CoA carboxylase is a heterohexamer composed of biotin carboxyl carrier protein (AccB), biotin carboxylase (AccC) and two subunits each of ACCase subunit alpha (AccA) and ACCase subunit beta (AccD).

The protein localises to the cytoplasm. It catalyses the reaction N(6)-carboxybiotinyl-L-lysyl-[protein] + acetyl-CoA = N(6)-biotinyl-L-lysyl-[protein] + malonyl-CoA. Its pathway is lipid metabolism; malonyl-CoA biosynthesis; malonyl-CoA from acetyl-CoA: step 1/1. In terms of biological role, component of the acetyl coenzyme A carboxylase (ACC) complex. First, biotin carboxylase catalyzes the carboxylation of biotin on its carrier protein (BCCP) and then the CO(2) group is transferred by the carboxyltransferase to acetyl-CoA to form malonyl-CoA. This Bacillus cereus (strain G9842) protein is Acetyl-coenzyme A carboxylase carboxyl transferase subunit alpha.